Consider the following 338-residue polypeptide: Adenylosuccinate synthetase (338 aa).

Residues 12–18 and 42–44 contribute to the GTP site; these read GDEGKGK and GHT. Aspartate 13 functions as the Proton acceptor in the catalytic mechanism. Mg(2+) contacts are provided by aspartate 13 and glycine 42. IMP is bound by residues 13 to 16, 40 to 43, threonine 127, arginine 141, glutamine 179, threonine 194, and arginine 256; these read DEGK and NAGH. The Proton donor role is filled by histidine 43. A substrate-binding site is contributed by 252 to 258; the sequence is TVTGRRR. GTP is bound by residues arginine 258, 284–286, and 324–326; these read CLD and STG.

Belongs to the adenylosuccinate synthetase family. Homodimer. Requires Mg(2+) as cofactor.

The protein localises to the cytoplasm. It catalyses the reaction IMP + L-aspartate + GTP = N(6)-(1,2-dicarboxyethyl)-AMP + GDP + phosphate + 2 H(+). It functions in the pathway purine metabolism; AMP biosynthesis via de novo pathway; AMP from IMP: step 1/2. Its function is as follows. Plays an important role in the de novo pathway of purine nucleotide biosynthesis. Catalyzes the first committed step in the biosynthesis of AMP from IMP. In Methanococcus vannielii (strain ATCC 35089 / DSM 1224 / JCM 13029 / OCM 148 / SB), this protein is Adenylosuccinate synthetase.